Consider the following 284-residue polypeptide: RNase adapter protein RapZ (284 aa).

An ATP-binding site is contributed by 8–15 (GRSGSGKS). Residue 56–59 (DVRN) coordinates GTP. Residues 266–284 (RARGKNVQSRHRTLEKRKQ) are RNA-binding.

This sequence belongs to the RapZ-like family. RapZ subfamily. Homotrimer.

Its function is as follows. Modulates the synthesis of GlmS, by affecting the processing and stability of the regulatory small RNA GlmZ. When glucosamine-6-phosphate (GlcN6P) concentrations are high in the cell, RapZ binds GlmZ and targets it to cleavage by RNase E. Consequently, GlmZ is inactivated and unable to activate GlmS synthesis. Under low GlcN6P concentrations, RapZ is sequestered and inactivated by an other regulatory small RNA, GlmY, preventing GlmZ degradation and leading to synthesis of GlmS. The protein is RNase adapter protein RapZ of Yersinia pseudotuberculosis serotype O:1b (strain IP 31758).